Consider the following 785-residue polypeptide: Phenylalanine--tRNA ligase beta subunit (785 aa).

The tRNA-binding domain occupies 38-150 (CEHLKTFVIA…NTYNVGDTFF (113 aa)). The region spanning 394 to 470 (VDNIELNFFP…RLYGYDKICE (77 aa)) is the B5 domain. Mg(2+) contacts are provided by D448, D454, E457, and E458. Residues 690–783 (SCYQSVKRDF…VAEKLGGVLR (94 aa)) form the FDX-ACB domain.

It belongs to the phenylalanyl-tRNA synthetase beta subunit family. Type 1 subfamily. In terms of assembly, tetramer of two alpha and two beta subunits. Requires Mg(2+) as cofactor.

It is found in the cytoplasm. It catalyses the reaction tRNA(Phe) + L-phenylalanine + ATP = L-phenylalanyl-tRNA(Phe) + AMP + diphosphate + H(+). This is Phenylalanine--tRNA ligase beta subunit from Ehrlichia canis (strain Jake).